Consider the following 231-residue polypeptide: Probable glutathione S-transferase GSTU1 (231 aa).

One can recognise a GST N-terminal domain in the interval Lys5–Pro84. Residues Ser15, Lys42, Ile56, and Glu68–Ser69 each bind glutathione. The 124-residue stretch at Ala97–Phe220 folds into the GST C-terminal domain.

This sequence belongs to the GST superfamily. Tau family.

The catalysed reaction is RX + glutathione = an S-substituted glutathione + a halide anion + H(+). Conjugation of reduced glutathione to a wide number of exogenous and endogenous hydrophobic electrophiles. This chain is Probable glutathione S-transferase GSTU1 (GSTU1), found in Oryza sativa subsp. japonica (Rice).